We begin with the raw amino-acid sequence, 472 residues long: Serine/threonine-protein kinase ULK3 (472 aa).

A Protein kinase domain is found at 14 to 270; it reads FILTERLGSG…FQDFFAHPWV (257 aa). ATP-binding positions include 20 to 28 and lysine 44; that span reads LGSGTYATV. Aspartate 137 (proton acceptor) is an active-site residue. Serine 176 carries the phosphoserine modification. The MIT 1 domain occupies 280–348; sequence SLGRATALVV…SRAEELKAIV (69 aa). Phosphoserine; by autocatalysis is present on residues serine 300, serine 350, serine 384, and serine 464. The 70-residue stretch at 375 to 444 folds into the MIT 2 domain; that stretch reads RLLAALEVAS…ARAEYLKEQV (70 aa).

This sequence belongs to the protein kinase superfamily. Ser/Thr protein kinase family. APG1/unc-51/ULK1 subfamily. As to quaternary structure, interacts (via protein kinase domain) with SUFU. Autophosphorylated. Autophosphorylation is blocked by interaction with SUFU. Widely expressed. Highest levels observed in fetal brain. In adult tissues, high levels in brain, liver and kidney, moderate levels in testis and adrenal gland and low levels in heart, lung, stomach, thymus, prostate and placenta. In the brain, highest expression in the hippocampus, high levels also detected in the cerebellum, olfactory bulb and optic nerve. In the central nervous system, lowest levels in the spinal cord.

Its subcellular location is the cytoplasm. It catalyses the reaction L-seryl-[protein] + ATP = O-phospho-L-seryl-[protein] + ADP + H(+). It carries out the reaction L-threonyl-[protein] + ATP = O-phospho-L-threonyl-[protein] + ADP + H(+). Serine/threonine protein kinase that acts as a regulator of Sonic hedgehog (SHH) signaling and autophagy. Acts as a negative regulator of SHH signaling in the absence of SHH ligand: interacts with SUFU, thereby inactivating the protein kinase activity and preventing phosphorylation of GLI proteins (GLI1, GLI2 and/or GLI3). Positively regulates SHH signaling in the presence of SHH: dissociates from SUFU, autophosphorylates and mediates phosphorylation of GLI2, activating it and promoting its nuclear translocation. Phosphorylates in vitro GLI2, as well as GLI1 and GLI3, although less efficiently. Also acts as a regulator of autophagy: following cellular senescence, able to induce autophagy. The polypeptide is Serine/threonine-protein kinase ULK3 (ULK3) (Homo sapiens (Human)).